Consider the following 168-residue polypeptide: MPITPLLHESVARFAATGADITTRAEPDLFVSIDPDHLRRILTAVLDNAITHGDGEIAVTAHARDGAVDIGVRDHGPGFADHFLPVAFDRFTRADTARGGRGSGLGLAIVAALTTTHGGHANATNHPDGGAELRITLPTPRPPFHEELPRITSSDTKDPNREHDTSDQ.

A Histidine kinase; second part domain is found at methionine 1 to arginine 141. Positions leucine 137–glutamine 168 are disordered. Positions proline 143–glutamine 168 are enriched in basic and acidic residues.

In terms of assembly, interacts with HK2.

The enzyme catalyses ATP + protein L-histidine = ADP + protein N-phospho-L-histidine.. In terms of biological role, member of the three-protein two-component system HK1/HK2/TcrA. Kinase that binds ATP and catalyzes the transfer of a phosphoryl group from ATP to HK2. The sequence is that of Sensor histidine kinase component HK1 from Mycobacterium tuberculosis (strain ATCC 25618 / H37Rv).